The primary structure comprises 530 residues: GMP synthase [glutamine-hydrolyzing] (530 aa).

Residues 4 to 205 (RILILDYGSQ…VKDICGCEGD (202 aa)) enclose the Glutamine amidotransferase type-1 domain. The Nucleophile role is filled by C84. Active-site residues include H179 and E181. Residues 206-398 (WNMPDYISEA…LGLPPQMVYR (193 aa)) enclose the GMPS ATP-PPase domain. 233–239 (SGGVDSL) provides a ligand contact to ATP.

In terms of assembly, homodimer.

The enzyme catalyses XMP + L-glutamine + ATP + H2O = GMP + L-glutamate + AMP + diphosphate + 2 H(+). It participates in purine metabolism; GMP biosynthesis; GMP from XMP (L-Gln route): step 1/1. Catalyzes the synthesis of GMP from XMP. This Bordetella parapertussis (strain 12822 / ATCC BAA-587 / NCTC 13253) protein is GMP synthase [glutamine-hydrolyzing].